Reading from the N-terminus, the 447-residue chain is Argininosuccinate lyase (447 aa).

It belongs to the lyase 1 family. Argininosuccinate lyase subfamily.

Its subcellular location is the cytoplasm. The enzyme catalyses 2-(N(omega)-L-arginino)succinate = fumarate + L-arginine. It participates in amino-acid biosynthesis; L-arginine biosynthesis; L-arginine from L-ornithine and carbamoyl phosphate: step 3/3. The chain is Argininosuccinate lyase from Bacteroides fragilis (strain ATCC 25285 / DSM 2151 / CCUG 4856 / JCM 11019 / LMG 10263 / NCTC 9343 / Onslow / VPI 2553 / EN-2).